The chain runs to 124 residues: Large ribosomal subunit protein uL14 (124 aa).

Belongs to the universal ribosomal protein uL14 family. Part of the 50S ribosomal subunit. Forms a cluster with proteins L3 and L19. In the 70S ribosome, L14 and L19 interact and together make contacts with the 16S rRNA in bridges B5 and B8.

Its function is as follows. Binds to 23S rRNA. Forms part of two intersubunit bridges in the 70S ribosome. The chain is Large ribosomal subunit protein uL14 from Clostridium novyi (strain NT).